A 306-amino-acid chain; its full sequence is tRNA (guanine-N(7)-)-methyltransferase (306 aa).

The span at 1–19 (MSSTAPLDSKATEQITTAA) shows a compositional bias: polar residues. The disordered stretch occupies residues 1–65 (MSSTAPLDSK…EASPELPSDE (65 aa)). Residues glycine 121, 144-145 (EI), 180-181 (NA), and cysteine 200 contribute to the S-adenosyl-L-methionine site. Aspartate 203 is an active-site residue. Residue 278–280 (TEE) participates in S-adenosyl-L-methionine binding.

This sequence belongs to the class I-like SAM-binding methyltransferase superfamily. TrmB family. As to quaternary structure, forms a complex with TRM82.

The protein resides in the nucleus. It catalyses the reaction guanosine(46) in tRNA + S-adenosyl-L-methionine = N(7)-methylguanosine(46) in tRNA + S-adenosyl-L-homocysteine. It participates in tRNA modification; N(7)-methylguanine-tRNA biosynthesis. In terms of biological role, catalyzes the formation of N(7)-methylguanine at position 46 (m7G46) in tRNA. The chain is tRNA (guanine-N(7)-)-methyltransferase from Lodderomyces elongisporus (strain ATCC 11503 / CBS 2605 / JCM 1781 / NBRC 1676 / NRRL YB-4239) (Yeast).